The following is a 239-amino-acid chain: Probable transcriptional regulatory protein Tcr_1104 (239 aa).

The protein belongs to the TACO1 family.

It localises to the cytoplasm. The protein is Probable transcriptional regulatory protein Tcr_1104 of Hydrogenovibrio crunogenus (strain DSM 25203 / XCL-2) (Thiomicrospira crunogena).